A 255-amino-acid polypeptide reads, in one-letter code: Pimeloyl-[acyl-carrier protein] methyl ester esterase (255 aa).

The AB hydrolase-1 domain maps to 16–242; it reads LVLLHGWGMN…SSHAPFITEP (227 aa). Residues tryptophan 22, 82–83, and 143–147 contribute to the substrate site; these read SL and FMALQ. Residue serine 82 is the Nucleophile of the active site. Catalysis depends on residues aspartate 207 and histidine 235. Histidine 235 lines the substrate pocket.

It belongs to the AB hydrolase superfamily. Carboxylesterase BioH family. In terms of assembly, monomer.

It is found in the cytoplasm. It carries out the reaction 6-carboxyhexanoyl-[ACP] methyl ester + H2O = 6-carboxyhexanoyl-[ACP] + methanol + H(+). It functions in the pathway cofactor biosynthesis; biotin biosynthesis. In terms of biological role, the physiological role of BioH is to remove the methyl group introduced by BioC when the pimeloyl moiety is complete. It allows to synthesize pimeloyl-ACP via the fatty acid synthetic pathway through the hydrolysis of the ester bonds of pimeloyl-ACP esters. This Vibrio vulnificus (strain CMCP6) protein is Pimeloyl-[acyl-carrier protein] methyl ester esterase.